Here is a 339-residue protein sequence, read N- to C-terminus: MPSVIVVGGQWGDEGKGSIVAYLSLHDEPEIIARGGVGTNAGHSVVINGKKYAVRQIPTGFMQTKARLLIGAGVLVDPEVFFHELEQLKDFNVKDRVGIDYRCAIIEEKHKQLDRTNGYLHGKIGTTGSGCGPANADRVMRKAKQAKDVKELEPYLTDVAQEINDALDEGSLVLVEGTQGFGLSLYYGTYPYVTSKDVTASSVAADVGIGPTRVDEVIVVFKSFPTRVGAGPFPTEMPMEEADRLGLVEYGTVTGRRRRVGWFDFEMARYSARINGATMLAVTMLDKYDKEAFGVTDYDKLPRKAKEFIEEIEERVGVPVGLIKTGPELEHIIDRRDTI.

GTP is bound by residues Gly12–Ser18 and Gly42–Ser44. The Proton acceptor role is filled by Asp13. Positions 13 and 42 each coordinate Mg(2+). IMP is bound by residues Asp13–Lys16, Asn40–His43, Thr127, Arg141, Gln179, Thr194, and Arg256. The Proton donor role is filled by His43. Thr252 to Arg258 lines the substrate pocket. GTP contacts are provided by residues Arg258, Met284–Asp286, and Lys324–Gly326.

The protein belongs to the adenylosuccinate synthetase family. In terms of assembly, homodimer. Mg(2+) serves as cofactor.

It localises to the cytoplasm. It carries out the reaction IMP + L-aspartate + GTP = N(6)-(1,2-dicarboxyethyl)-AMP + GDP + phosphate + 2 H(+). It functions in the pathway purine metabolism; AMP biosynthesis via de novo pathway; AMP from IMP: step 1/2. Its function is as follows. Plays an important role in the de novo pathway of purine nucleotide biosynthesis. Catalyzes the first committed step in the biosynthesis of AMP from IMP. This chain is Adenylosuccinate synthetase, found in Pyrococcus horikoshii (strain ATCC 700860 / DSM 12428 / JCM 9974 / NBRC 100139 / OT-3).